A 474-amino-acid polypeptide reads, in one-letter code: PRAME family member 7 (474 aa).

One copy of the LRR 1; degenerate repeat lies at 97 to 122 (QSKLQVLDLRNVDENFCDIFSGATAS). The LRR 2; degenerate repeat unit spans residues 177–201 (HVCCKELQVFGMPIHSIIEVLNMVE). An LRR 3; degenerate repeat occupies 202-228 (LDCIQEVEVCCPWELSTLVKFAPYLGQ). Residues 229-264 (MRNLRKLVLFNIRASACIPPDNKGQFIARFTSQFLK) form an LRR 4; degenerate repeat. LRR repeat units follow at residues 265–290 (LDYF…LRCL), 291–322 (QASL…RQLK), 323–341 (ELDL…PLTG), 347–374 (VATL…VLSR), and 375–399 (CSQL…LLRH).

Belongs to the PRAME family.

The polypeptide is PRAME family member 7 (Homo sapiens (Human)).